The sequence spans 562 residues: Urocanate hydratase (562 aa).

Residues 53-54 (GG), glutamine 131, 177-179 (GMG), glutamate 197, arginine 202, 243-244 (NA), 268-272 (QTSAH), 278-279 (YL), and tyrosine 327 contribute to the NAD(+) site. Cysteine 415 is an active-site residue. Glycine 497 is a binding site for NAD(+).

Belongs to the urocanase family. NAD(+) serves as cofactor.

The protein resides in the cytoplasm. The enzyme catalyses 4-imidazolone-5-propanoate = trans-urocanate + H2O. Its pathway is amino-acid degradation; L-histidine degradation into L-glutamate; N-formimidoyl-L-glutamate from L-histidine: step 2/3. Catalyzes the conversion of urocanate to 4-imidazolone-5-propionate. In Chelativorans sp. (strain BNC1), this protein is Urocanate hydratase.